The following is a 322-amino-acid chain: Protein SEC13 homolog (322 aa).

Val-2 carries the N-acetylvaline modification. WD repeat units follow at residues 11 to 50, 55 to 96, 101 to 144, 148 to 204, 210 to 253, and 260 to 299; these read SHED…QILI, GHEG…WEKS, GHDS…EVKK, AHTI…QWKE, AHSD…SNTW, and KFND…QWVC. Position 184 is a phosphoserine (Ser-184). A Phosphoserine modification is found at Ser-309.

Belongs to the WD repeat SEC13 family. At the nuclear pore: component of the Y-shaped Nup107-160 subcomplex of the nuclear pore complex (NPC). The Nup107-160 subcomplex includes NUP160, NUP133, NUP107, NUP98, NUP85, NUP43, NUP37, SEH1 and SEC13. At the COPII coat complex: interacts with SEC31A and SEC31B. Interacts with SEC16A. Interacts with SEC16B. Component of the GATOR2 subcomplex, composed of MIOS, SEC13, SEH1L, WDR24 and WDR59. The GATOR2 complex interacts with CASTOR1 and CASTOR2; the interaction is negatively regulated by arginine. The GATOR2 complex interacts with SESN1, SESN2 and SESN3; the interaction is negatively regulated by amino acids.

The protein localises to the cytoplasmic vesicle. It is found in the COPII-coated vesicle membrane. The protein resides in the endoplasmic reticulum membrane. It localises to the nucleus. Its subcellular location is the nuclear pore complex. The protein localises to the lysosome membrane. With respect to regulation, the GATOR2 complex is negatively regulated by the upstream amino acid sensors CASTOR1 and SESN2, which sequester the GATOR2 complex in absence of amino acids. In the presence of abundant amino acids, GATOR2 is released from CASTOR1 and SESN2 and activated. Functionally, functions as a component of the nuclear pore complex (NPC) and the COPII coat. At the endoplasmic reticulum, SEC13 is involved in the biogenesis of COPII-coated vesicles. Required for the exit of adipsin (CFD/ADN), an adipocyte-secreted protein from the endoplasmic reticulum. Its function is as follows. As a component of the GATOR2 complex, functions as an activator of the amino acid-sensing branch of the mTORC1 signaling pathway. The GATOR2 complex indirectly activates mTORC1 through the inhibition of the GATOR1 subcomplex. GATOR2 probably acts as an E3 ubiquitin-protein ligase toward GATOR1. In the presence of abundant amino acids, the GATOR2 complex mediates ubiquitination of the NPRL2 core component of the GATOR1 complex, leading to GATOR1 inactivation. In the absence of amino acids, GATOR2 is inhibited, activating the GATOR1 complex. Within the GATOR2 complex, SEC13 and SEH1L are required to stabilize the complex. The sequence is that of Protein SEC13 homolog from Homo sapiens (Human).